The sequence spans 903 residues: Dual serine/threonine and tyrosine protein kinase (903 aa).

A coiled-coil region spans residues 382 to 414; the sequence is ANRKQEEMKEMIVETLESMKEQLLEDAANLEFT. A Protein kinase domain is found at 627 to 881; the sequence is PKLGRELGRG…PLLGIVQPSL (255 aa). ATP-binding positions include 633-641 and Lys-656; that span reads LGRGQYGVV. Residue Asp-752 is the Proton acceptor of the active site.

The protein belongs to the protein kinase superfamily. Ser/Thr protein kinase family.

The protein localises to the cytoplasm. It localises to the cell membrane. The protein resides in the apical cell membrane. Its subcellular location is the basolateral cell membrane. It is found in the cell junction. The catalysed reaction is L-seryl-[protein] + ATP = O-phospho-L-seryl-[protein] + ADP + H(+). The enzyme catalyses L-threonyl-[protein] + ATP = O-phospho-L-threonyl-[protein] + ADP + H(+). It carries out the reaction L-tyrosyl-[protein] + ATP = O-phospho-L-tyrosyl-[protein] + ADP + H(+). May act as a positive regulator of ERK phosphorylation downstream of fibroblast growth factor-receptor activation. May induce both caspase-dependent apoptosis and caspase-independent cell death. May play a role in the embryonic development. This is Dual serine/threonine and tyrosine protein kinase from Pimephales promelas (Fathead minnow).